The chain runs to 640 residues: Guanylate-binding protein 4 (640 aa).

Residues 1–325 form a GTPase domain (Globular) region; that stretch reads MGERTLHAAV…DAINSGAVPC (325 aa). The GB1/RHD3-type G domain occupies 50–292; that stretch reads SQPVVVVAIV…FCSYIFTHAK (243 aa). GTP-binding positions include 60–67, 82–84, and 112–116; these read GLYRTGKS, LGS, and DTEGL. Positions 499-612 form a coiled coil; that stretch reads GEKAIAAERA…EQLRLLKILD (114 aa).

It belongs to the TRAFAC class dynamin-like GTPase superfamily. GB1/RHD3 GTPase family. GB1 subfamily. As to quaternary structure, heterodimer with other family members, including GBP1, GBP2 and GBP5. Dimerization regulates subcellular location. Interacts with IRF7; preventing interaction between TRAF6 and IRF7, resulting in impaired TRAF6-mediated IRF7 ubiquitination. Post-translationally, (Microbial infection) Ubiquitinated by S.flexneri IpaH9.8, leading to its degradation by the proteasome, thereby preventing its ability to promote host defense against bacterial infection.

It is found in the golgi apparatus membrane. It localises to the cytoplasm. The protein localises to the nucleus. The protein resides in the perinuclear region. The enzyme catalyses GTP + H2O = GDP + phosphate + H(+). Functionally, interferon (IFN)-inducible GTPase that plays important roles in innate immunity against a diverse range of bacterial, viral and protozoan pathogens. Negatively regulates the antiviral response by inhibiting activation of IRF7 transcription factor. The sequence is that of Guanylate-binding protein 4 from Homo sapiens (Human).